The chain runs to 193 residues: Xanthine phosphoribosyltransferase (193 aa).

Xanthine-binding residues include Leu-20 and Asn-27. 128–132 (ANGDA) serves as a coordination point for 5-phospho-alpha-D-ribose 1-diphosphate. Lys-156 serves as a coordination point for xanthine.

This sequence belongs to the purine/pyrimidine phosphoribosyltransferase family. Xpt subfamily. Homodimer.

Its subcellular location is the cytoplasm. The catalysed reaction is XMP + diphosphate = xanthine + 5-phospho-alpha-D-ribose 1-diphosphate. It functions in the pathway purine metabolism; XMP biosynthesis via salvage pathway; XMP from xanthine: step 1/1. In terms of biological role, converts the preformed base xanthine, a product of nucleic acid breakdown, to xanthosine 5'-monophosphate (XMP), so it can be reused for RNA or DNA synthesis. In Staphylococcus haemolyticus (strain JCSC1435), this protein is Xanthine phosphoribosyltransferase.